Consider the following 417-residue polypeptide: Glutamate-1-semialdehyde 2,1-aminomutase (417 aa).

The residue at position 267 (K267) is an N6-(pyridoxal phosphate)lysine.

Belongs to the class-III pyridoxal-phosphate-dependent aminotransferase family. HemL subfamily. In terms of assembly, homodimer. The cofactor is pyridoxal 5'-phosphate.

It localises to the cytoplasm. The catalysed reaction is (S)-4-amino-5-oxopentanoate = 5-aminolevulinate. It functions in the pathway porphyrin-containing compound metabolism; protoporphyrin-IX biosynthesis; 5-aminolevulinate from L-glutamyl-tRNA(Glu): step 2/2. The protein is Glutamate-1-semialdehyde 2,1-aminomutase of Solibacter usitatus (strain Ellin6076).